Here is a 250-residue protein sequence, read N- to C-terminus: Ubiquinone/menaquinone biosynthesis C-methyltransferase UbiE (250 aa).

Residues T73, D94, 122-123 (NA), and S139 each bind S-adenosyl-L-methionine.

It belongs to the class I-like SAM-binding methyltransferase superfamily. MenG/UbiE family.

The enzyme catalyses a 2-demethylmenaquinol + S-adenosyl-L-methionine = a menaquinol + S-adenosyl-L-homocysteine + H(+). It carries out the reaction a 2-methoxy-6-(all-trans-polyprenyl)benzene-1,4-diol + S-adenosyl-L-methionine = a 5-methoxy-2-methyl-3-(all-trans-polyprenyl)benzene-1,4-diol + S-adenosyl-L-homocysteine + H(+). Its pathway is quinol/quinone metabolism; menaquinone biosynthesis; menaquinol from 1,4-dihydroxy-2-naphthoate: step 2/2. The protein operates within cofactor biosynthesis; ubiquinone biosynthesis. Its function is as follows. Methyltransferase required for the conversion of demethylmenaquinol (DMKH2) to menaquinol (MKH2) and the conversion of 2-polyprenyl-6-methoxy-1,4-benzoquinol (DDMQH2) to 2-polyprenyl-3-methyl-6-methoxy-1,4-benzoquinol (DMQH2). In Francisella philomiragia subsp. philomiragia (strain ATCC 25017 / CCUG 19701 / FSC 153 / O#319-036), this protein is Ubiquinone/menaquinone biosynthesis C-methyltransferase UbiE.